We begin with the raw amino-acid sequence, 440 residues long: ATP-dependent protease ATPase subunit HslU (440 aa).

ATP contacts are provided by residues Val-18, 60-65 (GVGKTE), Asp-254, Glu-319, and Arg-391.

This sequence belongs to the ClpX chaperone family. HslU subfamily. A double ring-shaped homohexamer of HslV is capped on each side by a ring-shaped HslU homohexamer. The assembly of the HslU/HslV complex is dependent on binding of ATP.

It localises to the cytoplasm. Functionally, ATPase subunit of a proteasome-like degradation complex; this subunit has chaperone activity. The binding of ATP and its subsequent hydrolysis by HslU are essential for unfolding of protein substrates subsequently hydrolyzed by HslV. HslU recognizes the N-terminal part of its protein substrates and unfolds these before they are guided to HslV for hydrolysis. The chain is ATP-dependent protease ATPase subunit HslU from Cellvibrio japonicus (strain Ueda107) (Pseudomonas fluorescens subsp. cellulosa).